Consider the following 391-residue polypeptide: Phosphoglycerate kinase (391 aa).

Substrate-binding positions include 21–23, R36, 59–62, R113, and R146; these read DLN and HLGR. ATP-binding positions include K197, E319, and 345 to 348; that span reads GGDT.

This sequence belongs to the phosphoglycerate kinase family. Monomer.

It is found in the cytoplasm. It carries out the reaction (2R)-3-phosphoglycerate + ATP = (2R)-3-phospho-glyceroyl phosphate + ADP. Its pathway is carbohydrate degradation; glycolysis; pyruvate from D-glyceraldehyde 3-phosphate: step 2/5. In Shewanella woodyi (strain ATCC 51908 / MS32), this protein is Phosphoglycerate kinase.